A 134-amino-acid polypeptide reads, in one-letter code: Isocitrate dehydrogenase [NAD] subunit alpha, mitochondrial (134 aa).

The residue at position 37 (Lys-37) is an N6-succinyllysine. Residue Thr-50 is modified to Phosphothreonine. Residues Arg-64, Arg-74, and Arg-95 each contribute to the substrate site.

The protein belongs to the isocitrate and isopropylmalate dehydrogenases family. Heterooligomer of subunits alpha (IDH3A), beta (IDH3B), and gamma (IDH3G) in the apparent ratio of 2:1:1. The heterodimer containing one IDH3A and one IDH3B subunit and the heterodimer containing one IDH3A and one IDH3G subunit assemble into a heterotetramer (which contains two subunits of IDH3A, one of IDH3B and one of IDH3G) and further into the heterooctamer. Requires Mg(2+) as cofactor. Mn(2+) is required as a cofactor.

Its subcellular location is the mitochondrion. The enzyme catalyses D-threo-isocitrate + NAD(+) = 2-oxoglutarate + CO2 + NADH. The heterotetramer and the heterodimer composed of IDH3A and IDH3G subunits can be allosterically activated by citrate (CIT) or/and ADP, and the two activators can act independently or synergistically. The heterodimer composed of IDH3A and IDH3B subunits cannot be allosterically regulated and the allosteric regulation of the heterotetramer is through the IDH3G subunit and not the IDH3B subunit. The IDH3G subunit contains the allosteric site which consists of a CIT-binding site and an ADP-binding site, and the binding of CIT and ADP causes conformational changes at the allosteric site which are transmitted to the active site in the catalytic subunit (IDH3A) through a cascade of conformational changes at the heterodimer interface, leading to stabilization of the isocitrate-binding at the active site and thus activation of the enzyme. ATP can activate the heterotetramer and the heterodimer composed of IDH3A and IDH3G subunits at low concentrations but inhibits their activities at high concentrations, whereas ATP exhibits only inhibitory effect on the heterodimer composed of IDH3A and IDH3B subunits. Catalytic subunit of the enzyme which catalyzes the decarboxylation of isocitrate (ICT) into alpha-ketoglutarate. The heterodimer composed of the alpha (IDH3A) and beta (IDH3B) subunits and the heterodimer composed of the alpha (IDH3A) and gamma (IDH3G) subunits, have considerable basal activity but the full activity of the heterotetramer (containing two subunits of IDH3A, one of IDH3B and one of IDH3G) requires the assembly and cooperative function of both heterodimers. This Mesocricetus auratus (Golden hamster) protein is Isocitrate dehydrogenase [NAD] subunit alpha, mitochondrial.